Here is a 375-residue protein sequence, read N- to C-terminus: Succinyl-diaminopimelate desuccinylase (375 aa).

His66 serves as a coordination point for Zn(2+). The active site involves Asp68. Residue Asp99 coordinates Zn(2+). Glu133 serves as the catalytic Proton acceptor. Zn(2+) contacts are provided by Glu134, Glu162, and His348.

It belongs to the peptidase M20A family. DapE subfamily. Homodimer. The cofactor is Zn(2+). It depends on Co(2+) as a cofactor.

It catalyses the reaction N-succinyl-(2S,6S)-2,6-diaminopimelate + H2O = (2S,6S)-2,6-diaminopimelate + succinate. The protein operates within amino-acid biosynthesis; L-lysine biosynthesis via DAP pathway; LL-2,6-diaminopimelate from (S)-tetrahydrodipicolinate (succinylase route): step 3/3. In terms of biological role, catalyzes the hydrolysis of N-succinyl-L,L-diaminopimelic acid (SDAP), forming succinate and LL-2,6-diaminopimelate (DAP), an intermediate involved in the bacterial biosynthesis of lysine and meso-diaminopimelic acid, an essential component of bacterial cell walls. This is Succinyl-diaminopimelate desuccinylase from Stenotrophomonas maltophilia (strain K279a).